Here is a 227-residue protein sequence, read N- to C-terminus: Protein lin-28 (227 aa).

The span at Met1 to Ser17 shows a compositional bias: polar residues. Residues Met1 to Pro27 are disordered. Residues Arg52–Glu120 form the CSD domain. CCHC-type zinc fingers lie at residues Arg143–Asn160 and Lys166–Glu183. Positions 144, 147, 153, 158, 168, 171, 176, and 181 each coordinate Zn(2+). The tract at residues Cys181 to Glu227 is disordered.

The protein belongs to the lin-28 family. In terms of assembly, component of a complex at least containing lep-2, lin-28 and the long non-coding RNA lep-5, which mediates the degradation of lin-28. In terms of processing, cleavage by caspase ced-3 during larval development probably induces lin-28 degradation.

The protein localises to the cytoplasm. Heterochronic protein which controls the choice of stage specific cell fates. Regulates the timing of the second larval stage events (L2 events) in the hypodermis. May negatively regulate the larval to adult transition via the suppression of the microRNA (miRNA) let-7 during L3. Through this regulatory role, controls the timing of the sexual maturation of the nervous system. Also has a role in the fox-1-sex-1-mediated determination of sexual fate. Plays a role in governing the developmental timing of male tail tip morphogenesis. Plays a role in controlling the seam cell number during larval stages. Plays a role in vulval development. This is Protein lin-28 from Caenorhabditis elegans.